The chain runs to 414 residues: Glucose-1-phosphate adenylyltransferase (414 aa).

Alpha-D-glucose 1-phosphate-binding positions include G164, 181–182 (EK), and S199.

This sequence belongs to the bacterial/plant glucose-1-phosphate adenylyltransferase family. Homotetramer.

The catalysed reaction is alpha-D-glucose 1-phosphate + ATP + H(+) = ADP-alpha-D-glucose + diphosphate. Its pathway is glycan biosynthesis; glycogen biosynthesis. Its function is as follows. Involved in the biosynthesis of ADP-glucose, a building block required for the elongation reactions to produce glycogen. Catalyzes the reaction between ATP and alpha-D-glucose 1-phosphate (G1P) to produce pyrophosphate and ADP-Glc. In Leifsonia xyli subsp. xyli (strain CTCB07), this protein is Glucose-1-phosphate adenylyltransferase.